The following is a 305-amino-acid chain: Phosphatidylglycerol--prolipoprotein diacylglyceryl transferase (305 aa).

3 helical membrane passes run 10 to 30 (FLISFTLFGLPIVVRWYGAII), 59 to 79 (LMLGLVLGIAGARIYYVAFEW), and 92 to 112 (LTTGGIAIHGAIIGALLSTVI). An a 1,2-diacyl-sn-glycero-3-phospho-(1'-sn-glycerol)-binding site is contributed by Arg140. The next 2 helical transmembrane spans lie at 182–202 (LFHPTFLYESVWNLVGVGILL) and 260–280 (IRVAQLVSMVAIVVCGVLIFL).

Belongs to the Lgt family.

The protein resides in the cell membrane. The catalysed reaction is L-cysteinyl-[prolipoprotein] + a 1,2-diacyl-sn-glycero-3-phospho-(1'-sn-glycerol) = an S-1,2-diacyl-sn-glyceryl-L-cysteinyl-[prolipoprotein] + sn-glycerol 1-phosphate + H(+). It functions in the pathway protein modification; lipoprotein biosynthesis (diacylglyceryl transfer). In terms of biological role, catalyzes the transfer of the diacylglyceryl group from phosphatidylglycerol to the sulfhydryl group of the N-terminal cysteine of a prolipoprotein, the first step in the formation of mature lipoproteins. The chain is Phosphatidylglycerol--prolipoprotein diacylglyceryl transferase from Chloroflexus aggregans (strain MD-66 / DSM 9485).